A 495-amino-acid polypeptide reads, in one-letter code: tRNA(Ile)-lysidine synthase (495 aa).

26–31 provides a ligand contact to ATP; sequence SGGSDS.

Belongs to the tRNA(Ile)-lysidine synthase family.

The protein localises to the cytoplasm. The enzyme catalyses cytidine(34) in tRNA(Ile2) + L-lysine + ATP = lysidine(34) in tRNA(Ile2) + AMP + diphosphate + H(+). Ligates lysine onto the cytidine present at position 34 of the AUA codon-specific tRNA(Ile) that contains the anticodon CAU, in an ATP-dependent manner. Cytidine is converted to lysidine, thus changing the amino acid specificity of the tRNA from methionine to isoleucine. This chain is tRNA(Ile)-lysidine synthase, found in Bartonella tribocorum (strain CIP 105476 / IBS 506).